The following is a 92-amino-acid chain: Acylphosphatase (92 aa).

An Acylphosphatase-like domain is found at 7–92; it reads KTRCTISGRV…DPAPAEFSVG (86 aa). Active-site residues include Arg-22 and Asn-40.

The protein belongs to the acylphosphatase family.

It catalyses the reaction an acyl phosphate + H2O = a carboxylate + phosphate + H(+). The protein is Acylphosphatase (acyP) of Halorhodospira halophila (strain DSM 244 / SL1) (Ectothiorhodospira halophila (strain DSM 244 / SL1)).